The sequence spans 193 residues: Pre-histone-like nucleoprotein (193 aa).

Serine 2 carries the N-acetylserine; by host modification. The propeptide occupies 2–24; sequence SIFISPSNNTGWGLRAPSKMYGG. Residue lysine 48 is modified to N6-acetyllysine; by host. Threonine 55 bears the Phosphothreonine; by host mark. The Nuclear localization signal signature appears at 183–193; the sequence is RVPVRTRPPRT.

The protein belongs to the adenoviridae histone-like nucleoprotein family. As to quaternary structure, interacts with the core-capsid bridging protein; this interaction bridges the virus core to the capsid. Interacts with host NPM1; this interaction might play a role in placing the pre-histone-like nucleoprotein on the viral DNA or regulating viral gene expression. Interacts with host HMGB1; this interaction inhibits host immune response. In terms of processing, cleaved near the N-terminus by the viral protease during virion maturation to form the mature protein.

The protein resides in the virion. It localises to the host nucleus. It is found in the host nucleolus. Plays a role in the inhibition of host immune response within the nucleus. Interacts with cellular nucleosomes and immobilizes the host immune danger signal HMGB1 on chromatin. In turn, prevents HMGB1 release out of the cell and thus decreases inflammation. Also plays a role in the wrapping and condensation of the viral DNA. May also promote viral genome import into the nucleus. The sequence is that of Pre-histone-like nucleoprotein from Homo sapiens (Human).